The primary structure comprises 734 residues: DNA-binding protein RFX2 (734 aa).

The span at 1–23 shows a compositional bias: polar residues; the sequence is MQRSEGGSETPSTVALRTSTSAQ. The disordered stretch occupies residues 1 to 31; sequence MQRSEGGSETPSTVALRTSTSAQAPVVQPVP. The RFX-type winged-helix DNA-binding region spans 204–279; that stretch reads HLQWLLDNYE…YHYYGIRLKP (76 aa). A disordered region spans residues 694–722; it reads DTSFSDDMTSDGDMSRMSERSLTEPAVKR. Over residues 706–722 the composition is skewed to basic and acidic residues; the sequence is DMSRMSERSLTEPAVKR.

This sequence belongs to the RFX family. Homodimer. Heterodimer; heterodimerizes with other rfx proteins.

The protein resides in the nucleus. It localises to the cytoplasm. Functionally, transcription factor that acts as a key regulator of ciliogenesis. Specifically regulates expression of genes required for cilium assembly and function. Recognizes and binds the X-box, a regulatory motif with DNA sequence 5'-GTNRCC(0-3N)RGYAAC-3' present on promoters. The protein is DNA-binding protein RFX2 (rfx2) of Danio rerio (Zebrafish).